A 472-amino-acid chain; its full sequence is MVKLTMEPVTRIEGHAKITVHLDDAGNVEDTRLHVMEFRGFEKFLQGRPIEEAPRIVPRICGICDVQHHLAAAKAVDACFGFEPEDVLPAAYKMREIMNWGSYMHSHGLHFYFLAAPDFIAGKDRKTRNVFQIIKDAPDIALQAIELRKNALELVRATGGRPIHPTSSTPGGISTELDDETQKDLLKKAQRNVELAEATLELAVPIFEENIDLVNSLGNIETYHTGLVKDGVWDVYDGIVRIKDKEGNMFREFKPADYADTIAEHVKPYSWLKFPYIKDLGYPDGVYRVSPLSRLNVADKMPDAAPKAQEHFKEFRENFGYAQQTLLYHWARLIELLACAECAADALEGDLSGEKFPDSLERQAGDGVGIVEAPRGTLTHHYTCDENGLITKANIVVATIQNNPAMEMGIQKVAQDYIKPGVEVDDKIFNLMEMVIRAYDPCLSCATHTIDSQMRLATLEVYDSEGDLVKRI.

Cysteine 61, cysteine 64, cysteine 442, and cysteine 445 together coordinate Ni(2+).

The protein belongs to the [NiFe]/[NiFeSe] hydrogenase large subunit family. As to quaternary structure, the F420-non-reducing hydrogenase is composed of three subunits; MvhA, MvhD and MvhG. It forms a complex with the heterodisulfide reductase (hdr). It depends on Ni(2+) as a cofactor.

Its function is as follows. Part of a complex that provides reducing equivalents for heterodisulfide reductase. The sequence is that of F420-non-reducing hydrogenase subunit A (mvhA) from Methanothermobacter thermautotrophicus (strain ATCC 29096 / DSM 1053 / JCM 10044 / NBRC 100330 / Delta H) (Methanobacterium thermoautotrophicum).